Consider the following 240-residue polypeptide: Endonuclease NucS 1 (240 aa).

Belongs to the NucS endonuclease family.

Its subcellular location is the cytoplasm. Functionally, cleaves both 3' and 5' ssDNA extremities of branched DNA structures. This Halobacterium salinarum (strain ATCC 700922 / JCM 11081 / NRC-1) (Halobacterium halobium) protein is Endonuclease NucS 1.